The following is a 306-amino-acid chain: uncharacterized protein (306 aa).

D204 acts as the Proton acceptor in catalysis.

This sequence belongs to the aminoglycoside phosphotransferase family.

This is an uncharacterized protein from Bacillus subtilis (strain 168).